Consider the following 188-residue polypeptide: tRNA(Phe) 7-((3-amino-3-carboxypropyl)-4-demethylwyosine(37)-N(4))-methyltransferase (188 aa).

Belongs to the TYW3 family.

It carries out the reaction 4-demethyl-7-[(3S)-3-amino-3-carboxypropyl]wyosine(37) in tRNA(Phe) + S-adenosyl-L-methionine = 7-[(3S)-3-amino-3-carboxypropyl]wyosine(37) in tRNA(Phe) + S-adenosyl-L-homocysteine + H(+). S-adenosyl-L-methionine-dependent methyltransferase that acts as a component of the wyosine derivatives biosynthesis pathway. Probably methylates N-4 position of wybutosine-86 to produce wybutosine-72. In Aeropyrum pernix (strain ATCC 700893 / DSM 11879 / JCM 9820 / NBRC 100138 / K1), this protein is tRNA(Phe) 7-((3-amino-3-carboxypropyl)-4-demethylwyosine(37)-N(4))-methyltransferase.